The following is a 456-amino-acid chain: Peptide chain release factor PrfB1, chloroplastic (456 aa).

The transit peptide at Met-1–Phe-58 directs the protein to the chloroplast.

It belongs to the prokaryotic/mitochondrial release factor family. In terms of tissue distribution, expressed in leaves, stems and flowers.

Its subcellular location is the plastid. It is found in the chloroplast stroma. Functionally, directs the termination of translation in response to the peptide chain termination codon UGA. Required for the proper translation, stability and normal processing of UGA-containing polycistronic transcripts in chloroplasts. The protein is Peptide chain release factor PrfB1, chloroplastic of Arabidopsis thaliana (Mouse-ear cress).